The following is a 154-amino-acid chain: 6,7-dimethyl-8-ribityllumazine synthase (154 aa).

Residues Phe-22, 56–58 (AFE), and 80–82 (AVI) each bind 5-amino-6-(D-ribitylamino)uracil. 85-86 (AT) contacts (2S)-2-hydroxy-3-oxobutyl phosphate. The active-site Proton donor is the His-88. Phe-113 is a 5-amino-6-(D-ribitylamino)uracil binding site. Arg-127 is a binding site for (2S)-2-hydroxy-3-oxobutyl phosphate.

The protein belongs to the DMRL synthase family. Forms an icosahedral capsid composed of 60 subunits, arranged as a dodecamer of pentamers.

The enzyme catalyses (2S)-2-hydroxy-3-oxobutyl phosphate + 5-amino-6-(D-ribitylamino)uracil = 6,7-dimethyl-8-(1-D-ribityl)lumazine + phosphate + 2 H2O + H(+). The protein operates within cofactor biosynthesis; riboflavin biosynthesis; riboflavin from 2-hydroxy-3-oxobutyl phosphate and 5-amino-6-(D-ribitylamino)uracil: step 1/2. In terms of biological role, catalyzes the formation of 6,7-dimethyl-8-ribityllumazine by condensation of 5-amino-6-(D-ribitylamino)uracil with 3,4-dihydroxy-2-butanone 4-phosphate. This is the penultimate step in the biosynthesis of riboflavin. The protein is 6,7-dimethyl-8-ribityllumazine synthase of Geobacillus kaustophilus (strain HTA426).